Reading from the N-terminus, the 1463-residue chain is DNA polymerase III PolC-type (1463 aa).

Residues 425–581 enclose the Exonuclease domain; the sequence is YVVFDVETTG…YDAEATGRLL (157 aa).

The protein belongs to the DNA polymerase type-C family. PolC subfamily.

The protein localises to the cytoplasm. It catalyses the reaction DNA(n) + a 2'-deoxyribonucleoside 5'-triphosphate = DNA(n+1) + diphosphate. Its function is as follows. Required for replicative DNA synthesis. This DNA polymerase also exhibits 3' to 5' exonuclease activity. The protein is DNA polymerase III PolC-type of Streptococcus pneumoniae serotype 4 (strain ATCC BAA-334 / TIGR4).